A 324-amino-acid polypeptide reads, in one-letter code: Geranylgeranyl pyrophosphate synthase dpmpD (324 aa).

Residues Lys50, Arg53, and His82 each contribute to the isopentenyl diphosphate site. Asp89 and Asp93 together coordinate Mg(2+). Dimethylallyl diphosphate is bound at residue Arg98. Position 99 (Arg99) interacts with isopentenyl diphosphate. Positions 176, 177, and 210 each coordinate dimethylallyl diphosphate. Residue Asp213 coordinates Mg(2+). Dimethylallyl diphosphate contacts are provided by Asn217, Lys227, and Lys237.

It belongs to the FPP/GGPP synthase family. It depends on Mg(2+) as a cofactor.

The enzyme catalyses isopentenyl diphosphate + dimethylallyl diphosphate = (2E)-geranyl diphosphate + diphosphate. The catalysed reaction is isopentenyl diphosphate + (2E)-geranyl diphosphate = (2E,6E)-farnesyl diphosphate + diphosphate. It carries out the reaction isopentenyl diphosphate + (2E,6E)-farnesyl diphosphate = (2E,6E,10E)-geranylgeranyl diphosphate + diphosphate. It participates in secondary metabolite biosynthesis; terpenoid biosynthesis. Geranylgeranyl pyrophosphate synthase; part of the gene cluster that mediates the biosynthesis of diterpenoid pyrones. The first step of the pathway is the synthesis of the alpha-pyrone moiety by the polyketide synthase dpmpA via condensation of one acetyl-CoA starter unit with 3 malonyl-CoA units and 2 methylations. The alpha-pyrone is then combined with geranylgeranyl pyrophosphate (GGPP) formed by the GGPP synthase dpmpD through the action of the prenyltransferase dpmpC to yield a linear alpha-pyrone diterpenoid. Subsequent steps in the diterpenoid pyrone biosynthetic pathway involve the decalin core formation, which is initiated by the epoxidation of the C10-C11 olefin by the FAD-dependent oxidoreductase dpmpE, and is followed by a cyclization cascade catalyzed by the terpene cyclase dpmpB. The short chain dehydrogenase/reductase dpmpG then oxidizes the 8S hydroxy group to a ketone and the short chain dehydrogenase/reductase dpmpH reduces the ketone to the 8R hydroxy group to yield higginsianin B. Higginsianin B is further methylated by the methyltransferase dpmpI to produce the intermediate named FDDP B. The cytochrome P450 monooxygenase dpmpJ then oxidizes the C-26 methyl to primary alcohol, producing the final diterpenoid pyrone with a C-26 primary alcohol on the gamma-pyrone moiety named FDDP C. This Macrophomina phaseolina (strain MS6) (Charcoal rot fungus) protein is Geranylgeranyl pyrophosphate synthase dpmpD.